The sequence spans 404 residues: ATP phosphoribosyltransferase regulatory subunit (404 aa).

This sequence belongs to the class-II aminoacyl-tRNA synthetase family. HisZ subfamily. In terms of assembly, heteromultimer composed of HisG and HisZ subunits.

The protein localises to the cytoplasm. It participates in amino-acid biosynthesis; L-histidine biosynthesis; L-histidine from 5-phospho-alpha-D-ribose 1-diphosphate: step 1/9. Functionally, required for the first step of histidine biosynthesis. May allow the feedback regulation of ATP phosphoribosyltransferase activity by histidine. This chain is ATP phosphoribosyltransferase regulatory subunit, found in Trichormus variabilis (strain ATCC 29413 / PCC 7937) (Anabaena variabilis).